The primary structure comprises 151 residues: Transmembrane protein 239 (151 aa).

Helical transmembrane passes span 61–81 (LWGL…HALF), 85–105 (SYLL…LLPA), and 116–138 (ALLF…GLLT).

The protein resides in the membrane. The sequence is that of Transmembrane protein 239 (Tmem239) from Mus musculus (Mouse).